We begin with the raw amino-acid sequence, 69 residues long: Alpha-conotoxin-like Tx1 (69 aa).

Positions methionine 1–serine 21 are cleaved as a signal peptide. A propeptide spanning residues serine 22 to proline 49 is cleaved from the precursor. Intrachain disulfides connect cysteine 51–cysteine 57 and cysteine 52–cysteine 65. Residues serine 53–proline 55 form a ser-Xaa-Pro motif, crucial for potent interaction with nAChR region. Residue glycine 66 is modified to Glycine amide.

This sequence belongs to the conotoxin A superfamily. Expressed by the venom duct.

It localises to the secreted. Its function is as follows. Alpha-conotoxins act on postsynaptic membranes, they bind to the nicotinic acetylcholine receptors (nAChR) and thus inhibit them. The polypeptide is Alpha-conotoxin-like Tx1 (Conus textile (Cloth-of-gold cone)).